The primary structure comprises 482 residues: Proton extrusion protein PxcA (482 aa).

4 helical membrane-spanning segments follow: residues 265 to 285, 359 to 379, 406 to 426, and 442 to 462; these read FVLGLMIVPLLTQQVSKNLVI, PLKNAISDLFSLVALAIYFVL, IIILFTDVFVGFHSPHGWEVI, and FINMFIATFPVMLDTVFKYWI.

This sequence belongs to the CemA family.

The protein localises to the cell inner membrane. Its function is as follows. Required for H(+) efflux immediately after light irradiation to form a rapid H(+) concentration gradient across the thylakoid membranes. Together with PxcL, contributes to transient H(+) uptake following dark to light transition. The chain is Proton extrusion protein PxcA from Acaryochloris marina (strain MBIC 11017).